The chain runs to 320 residues: Malate dehydrogenase (320 aa).

Residues G10 to G15 and D34 contribute to the NAD(+) site. The substrate site is built by R83 and R89. NAD(+) is bound by residues N96 and I119–N121. N121 and R152 together coordinate substrate. Residue H176 is the Proton acceptor of the active site.

Belongs to the LDH/MDH superfamily. MDH type 3 family.

The enzyme catalyses (S)-malate + NAD(+) = oxaloacetate + NADH + H(+). Functionally, catalyzes the reversible oxidation of malate to oxaloacetate. This Maricaulis maris (strain MCS10) (Caulobacter maris) protein is Malate dehydrogenase.